Consider the following 77-residue polypeptide: Conotoxin ArMKLT2-0251 (77 aa).

Residues 1–22 form the signal peptide; sequence MKLTCVLIVAVLILTACQLIAA. A propeptide spanning residues 23–46 is cleaved from the precursor; that stretch reads DDSRDLKRFSRRKMRDGMLNTKNM. Position 49 is a pyrrolidone carboxylic acid (Q49). 3 cysteine pairs are disulfide-bonded: C50–C65, C57–C68, and C64–C73.

It belongs to the conotoxin O1 superfamily. Expressed by the venom duct.

Its subcellular location is the secreted. This is Conotoxin ArMKLT2-0251 from Conus arenatus (Sand-dusted cone).